We begin with the raw amino-acid sequence, 406 residues long: 4-hydroxy-3-methylbut-2-en-1-yl diphosphate synthase (ferredoxin) (406 aa).

Residues cysteine 315, cysteine 318, cysteine 349, and glutamate 356 each coordinate [4Fe-4S] cluster.

The protein belongs to the IspG family. [4Fe-4S] cluster serves as cofactor.

It catalyses the reaction (2E)-4-hydroxy-3-methylbut-2-enyl diphosphate + 2 oxidized [2Fe-2S]-[ferredoxin] + H2O = 2-C-methyl-D-erythritol 2,4-cyclic diphosphate + 2 reduced [2Fe-2S]-[ferredoxin] + H(+). Its pathway is isoprenoid biosynthesis; isopentenyl diphosphate biosynthesis via DXP pathway; isopentenyl diphosphate from 1-deoxy-D-xylulose 5-phosphate: step 5/6. Converts 2C-methyl-D-erythritol 2,4-cyclodiphosphate (ME-2,4cPP) into 1-hydroxy-2-methyl-2-(E)-butenyl 4-diphosphate. This chain is 4-hydroxy-3-methylbut-2-en-1-yl diphosphate synthase (ferredoxin), found in Gloeothece citriformis (strain PCC 7424) (Cyanothece sp. (strain PCC 7424)).